Here is a 786-residue protein sequence, read N- to C-terminus: Cyclin-F (786 aa).

The Nuclear localization signal 1 signature appears at 20–28; the sequence is KRRIRRRPR. In terms of domain architecture, F-box spans 29 to 76; that stretch reads NLTILSLPEDVLFHILKWLSVEDILAVRAVHSQLKDLVDNHASVWACA. A Cyclin N-terminal domain is found at 288–405; that stretch reads QASQAVSKQQ…EIVSALEGKI (118 aa). 4 consecutive short sequence motifs (d box) follow at residues 310–313, 343–346, 349–352, and 351–354; these read RYIL, RRRL, RYRL, and RLQL. Disordered stretches follow at residues 564-593 and 675-738; these read SPSGRRTKRKRENSLQEDRGSFVTTPTAEL and TQIP…HTQP. Residues 568 to 574 carry the Nuclear localization signal 2 motif; it reads RRTKRKR. The tract at residues 582–766 is PEST; the sequence is RGSFVTTPTA…ESSVPQQQVK (185 aa). The span at 697 to 714 shows a compositional bias: low complexity; that stretch reads VTTSGYSSVSTASPTSSV. Positions 723–738 are enriched in polar residues; it reads QPTSVLSLDSDSHTQP. Positions 767–770 match the D box 5 motif; that stretch reads RINL.

The protein belongs to the cyclin family. Cyclin AB subfamily. As to quaternary structure, component of the SCF(CCNF) complex consisting of CUL1, RBX1, SKP1 and CCNF. Interacts with SKP1. Interacts with CUL1. Interacts with CCNB1; interaction is required for nuclear localization of CCNB1. Interacts with CCP110; this interaction leads to CCP110 ubiquitination and degradation via the proteasome pathway. Interacts (via the Cyclin N-terminal domain) with MYBL2/BMYB. Interacts with FZR1/CDH1 (via N-terminus). Interacts with RRM2 (via Cy motif and when phosphorylated at 'Thr-33'); the interaction occurs exclusively in G2 and early M. Interacts with CDC6 (via Cy motif); the interaction takes place during G2 and M phase. In terms of processing, degraded when the spindle assembly checkpoint is activated during the G2-M transition. Degradation depends on the C-terminal PEST sequence. Post-translationally, phosphorylated just before cells enter into mitosis. Ubiquitinated by the anaphase-promoting complex (APC/C); leading to its degradation by the proteasome. As to expression, widely expressed, with expression detected in the heart, brain, placenta, lung, liver, skeletal muscle, kidney and pancreas.

It localises to the nucleus. The protein resides in the cytoplasm. Its subcellular location is the perinuclear region. It is found in the cytoskeleton. The protein localises to the microtubule organizing center. It localises to the centrosome. The protein resides in the centriole. Functionally, substrate recognition component of a SCF (SKP1-CUL1-F-box protein) E3 ubiquitin-protein ligase complex which mediates the ubiquitination and subsequent proteasomal degradation of target proteins. The SCF(CCNF) E3 ubiquitin-protein ligase complex is an integral component of the ubiquitin proteasome system (UPS) and links proteasome degradation to the cell cycle. Mediates the substrate recognition and the proteasomal degradation of various target proteins involved in the regulation of cell cycle progression and in the maintenance of genome stability. Mediates the ubiquitination and proteasomal degradation of CP110 during G2 phase, thereby acting as an inhibitor of centrosome reduplication. In G2, mediates the ubiquitination and subsequent degradation of ribonucleotide reductase RRM2, thereby maintaining a balanced pool of dNTPs and genome integrity. In G2, mediates the ubiquitination and proteasomal degradation of CDC6, thereby suppressing DNA re-replication and preventing genome instability. Involved in the ubiquitination and degradation of the substrate adapter CDH1 of the anaphase-promoting complex (APC/C), thereby acting as an antagonist of APC/C in regulating G1 progression and S phase entry. May play a role in the G2 cell cycle checkpoint control after DNA damage, possibly by promoting the ubiquitination of MYBL2/BMYB. This is Cyclin-F (CCNF) from Homo sapiens (Human).